Here is a 174-residue protein sequence, read N- to C-terminus: UPF0340 protein SAR2202 (174 aa).

Belongs to the UPF0340 family.

The polypeptide is UPF0340 protein SAR2202 (Staphylococcus aureus (strain MRSA252)).